We begin with the raw amino-acid sequence, 349 residues long: Paired box protein Pax-4 (349 aa).

The segment at residues 5–131 (GLSSVNQLGG…SSINRVLRAL (127 aa)) is a DNA-binding region (paired). Residues 8-64 (SVNQLGGLFVNGRPLPLDTRQQIVQLAIRGMRPCDISRSLKVSNGCVSKILGRYYRT) are PAI subdomain. Residues 83–131 (AVVARIAQLKDEYPALFAWEIQHQLCTEGLCTQDKAPSVSSINRVLRAL) are RED subdomain. A DNA-binding region (homeobox) is located at residues 170-229 (SHRNRTIFSPGQAEALEKEFQRGQYPDSVARGKLAAATSLPEDTVRVWFSNRRAKWRRQE). Residues 278-349 (FCQLCCGTAP…VPSTHCSNWP (72 aa)) are transcription repression.

It belongs to the paired homeobox family. As to expression, expressed in early pancreas. Later restricted to beta cells. Undetectable in adult islets.

Its subcellular location is the nucleus. Plays an important role in the differentiation and development of pancreatic islet beta cells. Transcriptional repressor that competes with PAX6 in binding to a common element in the glucagon, insulin and somatostatin promoters. This chain is Paired box protein Pax-4 (Pax4), found in Mus musculus (Mouse).